The following is a 367-amino-acid chain: Putative F-box protein At3g21130 (367 aa).

The region spanning 4-50 is the F-box domain; sequence KRNTVYLSEDLIVEILSRVSAVSLARLRTTSKRWNALVKDERLAKKH.

The sequence is that of Putative F-box protein At3g21130 from Arabidopsis thaliana (Mouse-ear cress).